The primary structure comprises 696 residues: DNA ligase (696 aa).

Residues 36–40, 85–86, and Glu-123 contribute to the NAD(+) site; these read DAEYD and SL. Catalysis depends on Lys-125, which acts as the N6-AMP-lysine intermediate. Residues Arg-146, Glu-181, Lys-319, and Lys-343 each contribute to the NAD(+) site. Residues Cys-437, Cys-440, Cys-455, and Cys-461 each contribute to the Zn(2+) site. In terms of domain architecture, BRCT spans 618–696; that stretch reads PEGTSLAGKT…EDGLKALLGL (79 aa).

The protein belongs to the NAD-dependent DNA ligase family. LigA subfamily. It depends on Mg(2+) as a cofactor. Mn(2+) is required as a cofactor.

It catalyses the reaction NAD(+) + (deoxyribonucleotide)n-3'-hydroxyl + 5'-phospho-(deoxyribonucleotide)m = (deoxyribonucleotide)n+m + AMP + beta-nicotinamide D-nucleotide.. DNA ligase that catalyzes the formation of phosphodiester linkages between 5'-phosphoryl and 3'-hydroxyl groups in double-stranded DNA using NAD as a coenzyme and as the energy source for the reaction. It is essential for DNA replication and repair of damaged DNA. In Bordetella pertussis (strain Tohama I / ATCC BAA-589 / NCTC 13251), this protein is DNA ligase.